The sequence spans 422 residues: Adenylosuccinate synthetase (422 aa).

Residues 12–18 (GDEGKGK) and 40–42 (GHT) each bind GTP. Aspartate 13 (proton acceptor) is an active-site residue. The Mg(2+) site is built by aspartate 13 and glycine 40. IMP contacts are provided by residues 13 to 16 (DEGK), 38 to 41 (NAGH), threonine 129, arginine 143, asparagine 221, threonine 236, and arginine 300. Histidine 41 (proton donor) is an active-site residue. 296-302 (VTTGRKR) contributes to the substrate binding site. Residues arginine 302, 328–330 (KLD), and 410–412 (GVG) contribute to the GTP site.

Belongs to the adenylosuccinate synthetase family. Homodimer. Mg(2+) serves as cofactor.

The protein localises to the cytoplasm. It catalyses the reaction IMP + L-aspartate + GTP = N(6)-(1,2-dicarboxyethyl)-AMP + GDP + phosphate + 2 H(+). Its pathway is purine metabolism; AMP biosynthesis via de novo pathway; AMP from IMP: step 1/2. Functionally, plays an important role in the de novo pathway and in the salvage pathway of purine nucleotide biosynthesis. Catalyzes the first committed step in the biosynthesis of AMP from IMP. The sequence is that of Adenylosuccinate synthetase from Pyrenophora tritici-repentis (strain Pt-1C-BFP) (Wheat tan spot fungus).